The primary structure comprises 362 residues: P2Y purinoceptor 1 (362 aa).

The Extracellular portion of the chain corresponds to 1 to 40; the sequence is MTEALISAALNGTQPELLAGGWAAGNATTKCSLTKTGFQF. Asn-11 and Asn-26 each carry an N-linked (GlcNAc...) asparagine glycan. 2 cysteine pairs are disulfide-bonded: Cys-31/Cys-285 and Cys-113/Cys-191. Lys-35 is a binding site for ADP. Residues 41-63 traverse the membrane as a helical segment; the sequence is YYLPTVYILVFITGFLGNSVAIW. Over 64–76 the chain is Cytoplasmic; it reads MFVFHMRPWSGIS. Residues 77 to 98 form a helical membrane-spanning segment; sequence VYMFNLALADFLYVLTLPALIF. At 99 to 114 the chain is on the extracellular side; that stretch reads YYFNKTDWIFGDVMCK. Residue Asn-102 is glycosylated (N-linked (GlcNAc...) asparagine). Residues 115–136 form a helical membrane-spanning segment; sequence LQRFIFHVNLYGSILFLTCISV. Residues 137–155 are Cytoplasmic-facing; the sequence is HRYTGVVHPLKSLGRLKKK. The chain crosses the membrane as a helical span at residues 156–177; sequence NAVYVSSLVWALVVAVIAPILF. Residues 178–203 are Extracellular-facing; the sequence is YSGTGVRRNKTITCYDTTADEYLRSY. The N-linked (GlcNAc...) asparagine glycan is linked to Asn-186. 192–194 contacts ADP; the sequence is YDT. The chain crosses the membrane as a helical span at residues 204–226; the sequence is FVYSMCTTVFMFCIPFIVILGCY. Topologically, residues 227–249 are cytoplasmic; that stretch reads GLIVKALIYKDLDNSPLRRKSIY. The chain crosses the membrane as a helical span at residues 250-273; the sequence is LVIIVLTVFAVSYLPFHVMKTLNL. Residues 272-276, 292-295, and Arg-299 contribute to the ADP site; these read NLRAR and YATY. Residues 274-292 lie on the Extracellular side of the membrane; it reads RARLDFQTPQMCAFNDKVY. The helical transmembrane segment at 293–314 threads the bilayer; it reads ATYQVTRGLASLNSCVDPILYF. At 315-362 the chain is on the cytoplasmic side; the sequence is LAGDTFRRRLSRATRKSSRRSEPNVQSKSEEMTLNILTEYKQNGDTSL.

Belongs to the G-protein coupled receptor 1 family. In terms of tissue distribution, brain, spinal cord, gastrointestinal tract, spleen and leg muscle. Is not detected in the heart, liver, stomach, lung and kidney.

The protein resides in the cell membrane. Receptor for extracellular adenine nucleotides such as ADP. In platelets, binding to ADP leads to mobilization of intracellular calcium ions via activation of phospholipase C, a change in platelet shape, and ultimately platelet aggregation. This Gallus gallus (Chicken) protein is P2Y purinoceptor 1 (P2RY1).